Here is a 300-residue protein sequence, read N- to C-terminus: Putative hydro-lyase Dshi_3152 (300 aa).

Belongs to the D-glutamate cyclase family.

The sequence is that of Putative hydro-lyase Dshi_3152 from Dinoroseobacter shibae (strain DSM 16493 / NCIMB 14021 / DFL 12).